The following is a 431-amino-acid chain: Glutamyl-tRNA(Gln) amidotransferase subunit A (431 aa).

Residues Lys-55 and Ser-130 each act as charge relay system in the active site. Ser-154 (acyl-ester intermediate) is an active-site residue.

It belongs to the amidase family. GatA subfamily. As to quaternary structure, heterotrimer of A, B and C subunits.

It carries out the reaction L-glutamyl-tRNA(Gln) + L-glutamine + ATP + H2O = L-glutaminyl-tRNA(Gln) + L-glutamate + ADP + phosphate + H(+). In terms of biological role, allows the formation of correctly charged Gln-tRNA(Gln) through the transamidation of misacylated Glu-tRNA(Gln) in organisms which lack glutaminyl-tRNA synthetase. The reaction takes place in the presence of glutamine and ATP through an activated gamma-phospho-Glu-tRNA(Gln). The polypeptide is Glutamyl-tRNA(Gln) amidotransferase subunit A (Methanococcus maripaludis (strain C5 / ATCC BAA-1333)).